The sequence spans 284 residues: Bifunctional protein FolD (284 aa).

NADP(+) is bound by residues 165–167 (GRG), threonine 192, and valine 233.

Belongs to the tetrahydrofolate dehydrogenase/cyclohydrolase family. Homodimer.

It catalyses the reaction (6R)-5,10-methylene-5,6,7,8-tetrahydrofolate + NADP(+) = (6R)-5,10-methenyltetrahydrofolate + NADPH. It carries out the reaction (6R)-5,10-methenyltetrahydrofolate + H2O = (6R)-10-formyltetrahydrofolate + H(+). It functions in the pathway one-carbon metabolism; tetrahydrofolate interconversion. Its function is as follows. Catalyzes the oxidation of 5,10-methylenetetrahydrofolate to 5,10-methenyltetrahydrofolate and then the hydrolysis of 5,10-methenyltetrahydrofolate to 10-formyltetrahydrofolate. This is Bifunctional protein FolD from Corynebacterium efficiens (strain DSM 44549 / YS-314 / AJ 12310 / JCM 11189 / NBRC 100395).